Here is a 161-residue protein sequence, read N- to C-terminus: MKFFAVLALCIVGAIASPLTADEASLVQSSWKAVSHNEVEILAAVFAAYPDIQNKFPQFAGKDLASIKDTGAFATHATRIVSFLSEVIALSGNESNASAVNSLVSKLGDDHKARGVSAAQFGEFRTALVAYLSNHVSWGDNVAAAWNKALDNTYAIVVPRL.

A signal peptide spans 1 to 16 (MKFFAVLALCIVGAIA). The region spanning 18-161 (PLTADEASLV…NTYAIVVPRL (144 aa)) is the Globin domain. Residues His-76 and His-111 each contribute to the heme b site.

Belongs to the globin family. In terms of assembly, homodimer.

The chain is Globin CTT-VIIB-8 (CTT-7B8) from Chironomus thummi thummi (Midge).